The chain runs to 456 residues: MSTSPLSVVILAAGKGTRMYSDLPKVLHPLAGKPMVQHVIDSALTLGARQVHLVYGHGGDLLKAHLSGQPLNWVLQAQQLGTGHAMQQAAPDFSDDEDILMLYGDVPLISAATLQRLIAAKPQGGIGLLTVKLDDPSGYGRIVRHHDRVVGIVEHKDASEAQRRINEINTGILVANGVDLKRWLARLDNNNAQGEFYITDIIAMAHQEGRQIAAVHPERLSEVEGVNNRLQLSALERAYQQQQAQRLLLAGVMLTDPARFDLRGELVHGRDVVIDTNVIIEGKVTLGNRVHIGSGCVLKDCQIADDSVISPYTVIEGARLAQACTVGPFARLRPGACLDAEAHVGNFVEMKKAHLGRGSKAGHLSYLGDAEIGAGVNIGAGTITCNYDGANKHQTVIGDDVFVGSDSQLVAPVTVGRGATIAAGTTVTKNVGDGELVLSRVKQVQLSGWERPVKKK.

Residues 1 to 229 are pyrophosphorylase; sequence MSTSPLSVVI…LSEVEGVNNR (229 aa). UDP-N-acetyl-alpha-D-glucosamine contacts are provided by residues 11-14, Lys-25, Gln-76, 81-82, 103-105, Gly-140, Glu-154, Asn-169, and Asn-227; these read LAAG, GT, and YGD. Asp-105 lines the Mg(2+) pocket. A Mg(2+)-binding site is contributed by Asn-227. The interval 230–250 is linker; the sequence is LQLSALERAYQQQQAQRLLLA. An N-acetyltransferase region spans residues 251-456; the sequence is GVMLTDPARF…SGWERPVKKK (206 aa). UDP-N-acetyl-alpha-D-glucosamine-binding residues include Arg-333 and Lys-351. His-363 acts as the Proton acceptor in catalysis. UDP-N-acetyl-alpha-D-glucosamine contacts are provided by Tyr-366 and Asn-377. Acetyl-CoA-binding positions include Ala-380, 386–387, Ser-405, Ala-423, and Arg-440; that span reads NY.

In the N-terminal section; belongs to the N-acetylglucosamine-1-phosphate uridyltransferase family. The protein in the C-terminal section; belongs to the transferase hexapeptide repeat family. As to quaternary structure, homotrimer. Mg(2+) serves as cofactor.

The protein localises to the cytoplasm. The catalysed reaction is alpha-D-glucosamine 1-phosphate + acetyl-CoA = N-acetyl-alpha-D-glucosamine 1-phosphate + CoA + H(+). It carries out the reaction N-acetyl-alpha-D-glucosamine 1-phosphate + UTP + H(+) = UDP-N-acetyl-alpha-D-glucosamine + diphosphate. It functions in the pathway nucleotide-sugar biosynthesis; UDP-N-acetyl-alpha-D-glucosamine biosynthesis; N-acetyl-alpha-D-glucosamine 1-phosphate from alpha-D-glucosamine 6-phosphate (route II): step 2/2. It participates in nucleotide-sugar biosynthesis; UDP-N-acetyl-alpha-D-glucosamine biosynthesis; UDP-N-acetyl-alpha-D-glucosamine from N-acetyl-alpha-D-glucosamine 1-phosphate: step 1/1. The protein operates within bacterial outer membrane biogenesis; LPS lipid A biosynthesis. In terms of biological role, catalyzes the last two sequential reactions in the de novo biosynthetic pathway for UDP-N-acetylglucosamine (UDP-GlcNAc). The C-terminal domain catalyzes the transfer of acetyl group from acetyl coenzyme A to glucosamine-1-phosphate (GlcN-1-P) to produce N-acetylglucosamine-1-phosphate (GlcNAc-1-P), which is converted into UDP-GlcNAc by the transfer of uridine 5-monophosphate (from uridine 5-triphosphate), a reaction catalyzed by the N-terminal domain. The polypeptide is Bifunctional protein GlmU (Edwardsiella ictaluri (strain 93-146)).